Consider the following 30-residue polypeptide: Gamma-II crystallin (30 aa).

In terms of domain architecture, Beta/gamma crystallin 'Greek key' spans 1-30; that stretch reads GKITFYEDRNFQGRCYECSTDCPDLSPYFS.

It belongs to the beta/gamma-crystallin family. As to quaternary structure, monomer.

Crystallins are the dominant structural components of the vertebrate eye lens. The polypeptide is Gamma-II crystallin (Rhizoprionodon acutus (Milk shark)).